Reading from the N-terminus, the 56-residue chain is FAAVSVDCSEYPKPDCTLEYRPLCGSDNKTYANKCNFCNAVVESNGTLTLSHFGKC.

A Kazal-like domain is found at 6-56 (VDCSEYPKPDCTLEYRPLCGSDNKTYANKCNFCNAVVESNGTLTLSHFGKC). Cystine bridges form between cysteine 8–cysteine 38, cysteine 16–cysteine 35, and cysteine 24–cysteine 56. The N-linked (GlcNAc...) asparagine glycan is linked to asparagine 45.

Its subcellular location is the secreted. This Callipepla squamata castanogastris (Chestnut bellied scaled quail) protein is Ovomucoid.